A 144-amino-acid polypeptide reads, in one-letter code: MASDKPLRLLLGFDYGTRQIGVAVGQAVTGQARELCVLKAQNGVPDWNRVEALIKEWQPDAIVVGLPLNMDGSPSEMSERAEKFGRRLNGRFNLPVFTHDERLTTYAAKGERLAQGQRDGYRERPVDALAAALLLEGWLAEHPD.

The protein belongs to the YqgF nuclease family.

The protein localises to the cytoplasm. Could be a nuclease involved in processing of the 5'-end of pre-16S rRNA. This chain is Putative pre-16S rRNA nuclease, found in Pseudomonas aeruginosa (strain LESB58).